The chain runs to 122 residues: Ribosome-binding factor A (122 aa).

This sequence belongs to the RbfA family. Monomer. Binds 30S ribosomal subunits, but not 50S ribosomal subunits or 70S ribosomes.

It localises to the cytoplasm. Its function is as follows. One of several proteins that assist in the late maturation steps of the functional core of the 30S ribosomal subunit. Associates with free 30S ribosomal subunits (but not with 30S subunits that are part of 70S ribosomes or polysomes). Required for efficient processing of 16S rRNA. May interact with the 5'-terminal helix region of 16S rRNA. The polypeptide is Ribosome-binding factor A (Streptococcus agalactiae serotype III (strain NEM316)).